A 572-amino-acid chain; its full sequence is Proline--tRNA ligase (572 aa).

The protein belongs to the class-II aminoacyl-tRNA synthetase family. ProS type 1 subfamily. In terms of assembly, homodimer.

The protein resides in the cytoplasm. It carries out the reaction tRNA(Pro) + L-proline + ATP = L-prolyl-tRNA(Pro) + AMP + diphosphate. Catalyzes the attachment of proline to tRNA(Pro) in a two-step reaction: proline is first activated by ATP to form Pro-AMP and then transferred to the acceptor end of tRNA(Pro). As ProRS can inadvertently accommodate and process non-cognate amino acids such as alanine and cysteine, to avoid such errors it has two additional distinct editing activities against alanine. One activity is designated as 'pretransfer' editing and involves the tRNA(Pro)-independent hydrolysis of activated Ala-AMP. The other activity is designated 'posttransfer' editing and involves deacylation of mischarged Ala-tRNA(Pro). The misacylated Cys-tRNA(Pro) is not edited by ProRS. This Yersinia pestis (strain Pestoides F) protein is Proline--tRNA ligase.